The following is a 76-amino-acid chain: uncharacterized protein (76 aa).

The required for interaction with PPP3CA stretch occupies residues Pro36–Thr41. Phosphothreonine occurs at positions 44 and 46.

In terms of assembly, interacts (via PxIxIT motif, when phosphorylated on Thr-44) with PPP3CA. As to expression, not expressed in pancreatic duct cells (at protein level). Abundantly expressed in the pancreas and weakly expressed in the thyroid. Not expressed in pancreatic duct cells (at protein level). Abundantly expressed in the lymph node and weakly expressed in the stomach, trachea and bone marrow.

This is an uncharacterized protein from Homo sapiens (Human).